The following is a 1029-amino-acid chain: Putative B3 domain-containing protein Os03g0621600 (1029 aa).

DNA-binding regions (TF-B3) lie at residues 147 to 240 (DTYF…FDPS), 339 to 430 (VAVM…RKMK), and 450 to 543 (EKYF…FDPS). The tract at residues 572–605 (TSYHDQPKGNKHWMQKDSSSKGNKIGNTRSSNTP) is disordered. Over residues 591–605 (SKGNKIGNTRSSNTP) the composition is skewed to polar residues. The segment at residues 731 to 824 (YKNFFKVMIG…KLKVLIFGPS (94 aa)) is a DNA-binding region (TF-B3 4). A compositionally biased stretch (polar residues) spans 852–867 (SSNSHDLPVKSPQNVS). Residues 852-882 (SSNSHDLPVKSPQNVSKSEKQWDSSEQENDT) form a disordered region. The segment at residues 934 to 1029 (GCILRKSRVH…SMNVHIIPKK (96 aa)) is a DNA-binding region (TF-B3 5).

The protein localises to the nucleus. This chain is Putative B3 domain-containing protein Os03g0621600, found in Oryza sativa subsp. japonica (Rice).